We begin with the raw amino-acid sequence, 225 residues long: Endonuclease V (225 aa).

The Mg(2+) site is built by D43 and D110.

This sequence belongs to the endonuclease V family. Mg(2+) serves as cofactor.

It is found in the cytoplasm. The catalysed reaction is Endonucleolytic cleavage at apurinic or apyrimidinic sites to products with a 5'-phosphate.. Its function is as follows. DNA repair enzyme involved in the repair of deaminated bases. Selectively cleaves double-stranded DNA at the second phosphodiester bond 3' to a deoxyinosine leaving behind the intact lesion on the nicked DNA. The chain is Endonuclease V from Thermotoga sp. (strain RQ2).